Consider the following 388-residue polypeptide: Probable ubiquitin-conjugating enzyme E2 L709 (388 aa).

Residues 3-162 (NVHKRVIKDI…GNDLMVQKLF (160 aa)) form the UBC core domain. The Glycyl thioester intermediate role is filled by Cys-95. Positions 195-388 (VEEKSAKTSK…SSKSSKTGKK (194 aa)) are disordered. Composition is skewed to acidic residues over residues 221–238 (SEEEENSDDDNTDSDSES) and 246–297 (DVVD…ESEE). Over residues 310–388 (KTTTKSSSTK…SSKSSKTGKK (79 aa)) the composition is skewed to low complexity.

It belongs to the ubiquitin-conjugating enzyme family.

It carries out the reaction S-ubiquitinyl-[E1 ubiquitin-activating enzyme]-L-cysteine + [E2 ubiquitin-conjugating enzyme]-L-cysteine = [E1 ubiquitin-activating enzyme]-L-cysteine + S-ubiquitinyl-[E2 ubiquitin-conjugating enzyme]-L-cysteine.. It functions in the pathway protein modification; protein ubiquitination. Catalyzes the covalent attachment of ubiquitin to other proteins. This is Probable ubiquitin-conjugating enzyme E2 L709 from Acanthamoeba polyphaga (Amoeba).